The chain runs to 250 residues: Type III pantothenate kinase (250 aa).

13–20 is a binding site for ATP; it reads DVGNSYLK. 110–113 serves as a coordination point for substrate; the sequence is GNDL. D112 (proton acceptor) is an active-site residue. T134 is an ATP binding site. T186 lines the substrate pocket.

The protein belongs to the type III pantothenate kinase family. As to quaternary structure, homodimer. NH4(+) serves as cofactor. Requires K(+) as cofactor.

Its subcellular location is the cytoplasm. It carries out the reaction (R)-pantothenate + ATP = (R)-4'-phosphopantothenate + ADP + H(+). It participates in cofactor biosynthesis; coenzyme A biosynthesis; CoA from (R)-pantothenate: step 1/5. In terms of biological role, catalyzes the phosphorylation of pantothenate (Pan), the first step in CoA biosynthesis. The polypeptide is Type III pantothenate kinase (Mycoplasmopsis synoviae (strain 53) (Mycoplasma synoviae)).